A 174-amino-acid polypeptide reads, in one-letter code: Peptide deformylase (174 aa).

Fe cation-binding residues include Cys-94 and His-136. Glu-137 is an active-site residue. His-140 serves as a coordination point for Fe cation.

The protein belongs to the polypeptide deformylase family. It depends on Fe(2+) as a cofactor.

The catalysed reaction is N-terminal N-formyl-L-methionyl-[peptide] + H2O = N-terminal L-methionyl-[peptide] + formate. Removes the formyl group from the N-terminal Met of newly synthesized proteins. Requires at least a dipeptide for an efficient rate of reaction. N-terminal L-methionine is a prerequisite for activity but the enzyme has broad specificity at other positions. The polypeptide is Peptide deformylase (Rhizobium meliloti (strain 1021) (Ensifer meliloti)).